The primary structure comprises 345 residues: Dihydroorotase (345 aa).

Zn(2+) is bound by residues H13 and H15. Residues 15 to 17 (HLR) and N41 each bind substrate. Zn(2+) is bound by residues K99, H136, and H174. The residue at position 99 (K99) is an N6-carboxylysine. H136 contacts substrate. A substrate-binding site is contributed by L219. A Zn(2+)-binding site is contributed by D247. The active site involves D247. Residues H251 and A263 each contribute to the substrate site.

Belongs to the metallo-dependent hydrolases superfamily. DHOase family. Class II DHOase subfamily. As to quaternary structure, homodimer. Zn(2+) serves as cofactor.

It carries out the reaction (S)-dihydroorotate + H2O = N-carbamoyl-L-aspartate + H(+). It participates in pyrimidine metabolism; UMP biosynthesis via de novo pathway; (S)-dihydroorotate from bicarbonate: step 3/3. Catalyzes the reversible cyclization of carbamoyl aspartate to dihydroorotate. This Hahella chejuensis (strain KCTC 2396) protein is Dihydroorotase.